The primary structure comprises 777 residues: Acyl-homoserine lactone acylase PvdQ (777 aa).

A signal peptide spans 1–25; that stretch reads MIISRQLPSFCLAALFLSFSGGAHA. A propeptide spans 196 to 218 (spacer peptide); sequence AGLPAEHWQLAAARQQRFALDRG. Ser-219 serves as the catalytic Nucleophile.

It belongs to the peptidase S45 family. Heterodimer of an alpha subunit and a beta subunit processed from the same precursor.

It is found in the periplasm. The catalysed reaction is an N-acyl-L-homoserine lactone + H2O = L-homoserine lactone + a carboxylate. In terms of biological role, catalyzes the deacylation of acyl-homoserine lactone (AHL or acyl-HSL), releasing homoserine lactone (HSL) and the corresponding fatty acid. Possesses a specificity for the degradation of long-chain acyl-HSLs (side chains of 11 to 14 carbons in length). The chain is Acyl-homoserine lactone acylase PvdQ (pvdQ) from Pseudomonas fluorescens (strain ATCC BAA-477 / NRRL B-23932 / Pf-5).